A 197-amino-acid chain; its full sequence is Xanthine phosphoribosyltransferase (197 aa).

Residues Leu-20 and Asn-27 each coordinate xanthine. A 5-phospho-alpha-D-ribose 1-diphosphate-binding site is contributed by 128 to 132 (ANGQA). Lys-156 provides a ligand contact to xanthine.

Belongs to the purine/pyrimidine phosphoribosyltransferase family. Xpt subfamily. In terms of assembly, homodimer.

The protein localises to the cytoplasm. It carries out the reaction XMP + diphosphate = xanthine + 5-phospho-alpha-D-ribose 1-diphosphate. Its pathway is purine metabolism; XMP biosynthesis via salvage pathway; XMP from xanthine: step 1/1. In terms of biological role, converts the preformed base xanthine, a product of nucleic acid breakdown, to xanthosine 5'-monophosphate (XMP), so it can be reused for RNA or DNA synthesis. This Bacillus mycoides (strain KBAB4) (Bacillus weihenstephanensis) protein is Xanthine phosphoribosyltransferase.